Here is a 184-residue protein sequence, read N- to C-terminus: Uroplakin-2 (184 aa).

An N-terminal signal peptide occupies residues 1 to 25 (MASTLPVQTLPLILILLAVLAPGTA). The propeptide occupies 26–84 (DFNISSLSGLLSPALTESLLIALPPCHLTGGNATLMVRRANDSKVVKSDFVVPPCRGRR). Residues asparagine 28, asparagine 57, and asparagine 66 are each glycosylated (N-linked (GlcNAc...) asparagine). The Lumenal segment spans residues 85–155 (ELVSVVDSGS…IGLGMARTGG (71 aa)). The chain crosses the membrane as a helical span at residues 156-180 (MVVITVLLSVAMFLLVVGLIVALHW). The Cytoplasmic portion of the chain corresponds to 181 to 184 (DARK).

It belongs to the uroplakin-2 family. Interacts with uroplakin-1a (UPK1A).

The protein resides in the cell membrane. Its function is as follows. Component of the asymmetric unit membrane (AUM); a highly specialized biomembrane elaborated by terminally differentiated urothelial cells. May play an important role in regulating the assembly of the AUM. This chain is Uroplakin-2 (Upk2), found in Mus musculus (Mouse).